The chain runs to 112 residues: uncharacterized protein (112 aa).

The segment at 90–112 (KNFNNSKNDQIKKKKIDNNQVNL) is disordered.

This is an uncharacterized protein from Buchnera aphidicola subsp. Acyrthosiphon pisum (strain APS) (Acyrthosiphon pisum symbiotic bacterium).